Reading from the N-terminus, the 191-residue chain is Cell division protein SepF (191 aa).

The tract at residues 150–191 (TSSSPEEASPSSVSPKNTPQYSVENNTAPEPAWGNSKLSAFS) is disordered. Residues 151–164 (SSSPEEASPSSVSP) are compositionally biased toward low complexity. Residues 165 to 177 (KNTPQYSVENNTA) are compositionally biased toward polar residues.

It belongs to the SepF family. In terms of assembly, homodimer. Interacts with FtsZ.

The protein resides in the cytoplasm. Its function is as follows. Cell division protein that is part of the divisome complex and is recruited early to the Z-ring. Probably stimulates Z-ring formation, perhaps through the cross-linking of FtsZ protofilaments. Its function overlaps with FtsA. The protein is Cell division protein SepF of Prochlorococcus marinus (strain MIT 9312).